A 467-amino-acid chain; its full sequence is Asparagine--tRNA ligase (467 aa).

This sequence belongs to the class-II aminoacyl-tRNA synthetase family. In terms of assembly, homodimer.

Its subcellular location is the cytoplasm. It catalyses the reaction tRNA(Asn) + L-asparagine + ATP = L-asparaginyl-tRNA(Asn) + AMP + diphosphate + H(+). In Histophilus somni (strain 129Pt) (Haemophilus somnus), this protein is Asparagine--tRNA ligase.